Consider the following 527-residue polypeptide: Pyruvate kinase 1, cytosolic (527 aa).

Arg58 lines the substrate pocket. K(+) contacts are provided by Asp60, Ser62, Asp92, and Thr93. 60–63 contributes to the ATP binding site; that stretch reads DFSW. Lys256 contacts substrate. A Mg(2+)-binding site is contributed by Glu258. Residues Gly281, Asn282, and Thr313 each contribute to the substrate site. Asn282 serves as a coordination point for Mg(2+).

Belongs to the pyruvate kinase family. In terms of assembly, homotetramer. Mg(2+) serves as cofactor. Requires K(+) as cofactor.

It is found in the cytoplasm. The protein resides in the cytosol. The enzyme catalyses pyruvate + ATP = phosphoenolpyruvate + ADP + H(+). The protein operates within carbohydrate degradation; glycolysis; pyruvate from D-glyceraldehyde 3-phosphate: step 5/5. Key regulatory enzyme of the glycolytic pathway that catalyzes the final step of glycolysis, converting ADP and phosphoenolpyruvate (PEP) to ATP and pyruvate by essentially irreversible transphosphorylation. Is critical for plant growth and development. This is Pyruvate kinase 1, cytosolic from Oryza sativa subsp. indica (Rice).